Here is a 208-residue protein sequence, read N- to C-terminus: Large ribosomal subunit protein uL4 (208 aa).

Residues 49 to 78 (KAKGISDISGTTAKPYRQKHTGRARQGSLR) form a disordered region.

This sequence belongs to the universal ribosomal protein uL4 family. In terms of assembly, part of the 50S ribosomal subunit.

Its function is as follows. One of the primary rRNA binding proteins, this protein initially binds near the 5'-end of the 23S rRNA. It is important during the early stages of 50S assembly. It makes multiple contacts with different domains of the 23S rRNA in the assembled 50S subunit and ribosome. Functionally, forms part of the polypeptide exit tunnel. This Anaplasma phagocytophilum (strain HZ) protein is Large ribosomal subunit protein uL4.